The chain runs to 269 residues: Phosphate import ATP-binding protein PstB (269 aa).

The 243-residue stretch at 22 to 264 folds into the ABC transporter domain; the sequence is AEVRDLNFYY…PVQQKTADYV (243 aa). Residue 54 to 61 coordinates ATP; the sequence is GPSGCGKT.

This sequence belongs to the ABC transporter superfamily. Phosphate importer (TC 3.A.1.7) family. As to quaternary structure, the complex is composed of two ATP-binding proteins (PstB), two transmembrane proteins (PstC and PstA) and a solute-binding protein (PstS).

The protein resides in the cell inner membrane. The catalysed reaction is phosphate(out) + ATP + H2O = ADP + 2 phosphate(in) + H(+). In terms of biological role, part of the ABC transporter complex PstSACB involved in phosphate import. Responsible for energy coupling to the transport system. This Thermosynechococcus vestitus (strain NIES-2133 / IAM M-273 / BP-1) protein is Phosphate import ATP-binding protein PstB.